Reading from the N-terminus, the 464-residue chain is Asparagine--tRNA ligase (464 aa).

The protein belongs to the class-II aminoacyl-tRNA synthetase family. Homodimer.

The protein localises to the cytoplasm. It carries out the reaction tRNA(Asn) + L-asparagine + ATP = L-asparaginyl-tRNA(Asn) + AMP + diphosphate + H(+). The protein is Asparagine--tRNA ligase of Xanthomonas campestris pv. campestris (strain 8004).